Consider the following 394-residue polypeptide: RILP-like protein 1 (394 aa).

One can recognise an RH1 domain in the interval 2–89 (EGISALEKNV…RLERMDRIEK (88 aa)). Positions 68-312 (EMEELRLELD…KVFMLQEELA (245 aa)) form a coiled coil. Residues 282-347 (RPRFTLQELR…IPQESGIKRL (66 aa)) enclose the RH2 domain. The interval 318–337 (EADEEHKLPQSSPVIDSKAP) is disordered.

Belongs to the RILPL family.

It is found in the cytoplasm. The protein localises to the cytosol. It localises to the cytoskeleton. Its subcellular location is the microtubule organizing center. The protein resides in the centrosome. It is found in the cell projection. The protein localises to the cilium. Plays a role in the regulation of cell shape and polarity. Plays a role in cellular protein transport, including protein transport away from primary cilia. Neuroprotective protein. This Xenopus tropicalis (Western clawed frog) protein is RILP-like protein 1 (rilpl1).